Consider the following 797-residue polypeptide: Short transient receptor potential channel 4-associated protein (797 aa).

A2 carries the N-acetylalanine modification. The tract at residues 2-400 (AAAPVAAGSG…VLYVLCVLLM (399 aa)) is interaction with TNFRSF1A.

As to quaternary structure, component of the DCX(TRPC4AP) E3 ubiquitin ligase complex, at least composed of CUL4A, DDB1, TRPC4AP/TRUSS and RBX1. Interacts with MYC. Constitutively associated with TNFRSF1A. Directly interacts with TRADD, TRAF2, CHUK, IKBKB and IKBKG. Interacts with TRPC1, TRPC4 and TRPC5. In terms of assembly, (Microbial infection) Interacts with Hepatitis B virus (HBV) protein X; leading to prevent ubiquitination of TRPC4AP by SKP2. Phosphorylated by GSK3B; phosphorylation is required for ubiquitination. Post-translationally, ubiquitinated by a SCF (SKP1-CUL1-F-box protein) E3 ubiquitin-protein ligase containing SKP2, leading to its degradation. Phosphorylation by GSK3B is required for ubiquitination.

It localises to the cytoplasm. The protein resides in the perinuclear region. Its pathway is protein modification; protein ubiquitination. In terms of biological role, substrate-recognition component of a DCX (DDB1-CUL4-X-box) E3 ubiquitin-protein ligase complex required for cell cycle control. The DCX(TRPC4AP) complex specifically mediates the polyubiquitination and subsequent degradation of MYC as part of the DesCEND (destruction via C-end degrons) pathway. The DesCEND (destruction via C-end degrons) pathway recognizes a C-degron located at the extreme C terminus of target proteins, leading to their ubiquitination and degradation. The DCX(TRPC4AP) complex specifically recognizes proteins with an arginine at the minus 3 position (R-3 motif) at the C-terminus, such as MYC, leading to their ubiquitination and degradation. Also participates in the activation of NFKB1 in response to ligation of TNFRSF1A, possibly by linking TNFRSF1A to the IKK signalosome. Involved in JNK activation via its interaction with TRAF2. Also involved in elevation of endoplasmic reticulum Ca(2+) storage reduction in response to CHRM1. The protein is Short transient receptor potential channel 4-associated protein of Homo sapiens (Human).